We begin with the raw amino-acid sequence, 232 residues long: Thiamine import ATP-binding protein ThiQ (232 aa).

Residues 2–230 (LKLTDITWLY…KASASALLGI (229 aa)) form the ABC transporter domain. 32 to 39 (GPSGAGKS) contacts ATP.

This sequence belongs to the ABC transporter superfamily. Thiamine importer (TC 3.A.1.19.1) family. The complex is composed of two ATP-binding proteins (ThiQ), two transmembrane proteins (ThiP) and a solute-binding protein (ThiB).

The protein localises to the cell inner membrane. The enzyme catalyses thiamine(out) + ATP + H2O = thiamine(in) + ADP + phosphate + H(+). Its function is as follows. Part of the ABC transporter complex ThiBPQ involved in thiamine import. Responsible for energy coupling to the transport system. This chain is Thiamine import ATP-binding protein ThiQ, found in Escherichia coli (strain UTI89 / UPEC).